The chain runs to 555 residues: Dihydroxy-acid dehydratase (555 aa).

Aspartate 78 is a binding site for Mg(2+). Cysteine 119 is a [2Fe-2S] cluster binding site. The Mg(2+) site is built by aspartate 120 and lysine 121. At lysine 121 the chain carries N6-carboxylysine. Cysteine 192 contributes to the [2Fe-2S] cluster binding site. Glutamate 444 lines the Mg(2+) pocket. The active-site Proton acceptor is the serine 470.

It belongs to the IlvD/Edd family. In terms of assembly, homodimer. It depends on [2Fe-2S] cluster as a cofactor. Mg(2+) serves as cofactor.

It catalyses the reaction (2R)-2,3-dihydroxy-3-methylbutanoate = 3-methyl-2-oxobutanoate + H2O. The catalysed reaction is (2R,3R)-2,3-dihydroxy-3-methylpentanoate = (S)-3-methyl-2-oxopentanoate + H2O. It participates in amino-acid biosynthesis; L-isoleucine biosynthesis; L-isoleucine from 2-oxobutanoate: step 3/4. The protein operates within amino-acid biosynthesis; L-valine biosynthesis; L-valine from pyruvate: step 3/4. Its function is as follows. Functions in the biosynthesis of branched-chain amino acids. Catalyzes the dehydration of (2R,3R)-2,3-dihydroxy-3-methylpentanoate (2,3-dihydroxy-3-methylvalerate) into 2-oxo-3-methylpentanoate (2-oxo-3-methylvalerate) and of (2R)-2,3-dihydroxy-3-methylbutanoate (2,3-dihydroxyisovalerate) into 2-oxo-3-methylbutanoate (2-oxoisovalerate), the penultimate precursor to L-isoleucine and L-valine, respectively. This chain is Dihydroxy-acid dehydratase, found in Halalkalibacterium halodurans (strain ATCC BAA-125 / DSM 18197 / FERM 7344 / JCM 9153 / C-125) (Bacillus halodurans).